We begin with the raw amino-acid sequence, 162 residues long: MERSTRAWMSIVVVQAMGSVWMCYAKQNSASHYTSTLPALSRAHALPLALLCILRIVLIFDFRNFSIHIAHILLSILTAIHTMTEVFFYQSMSYGIVTVTEVTLNSFSVVVMLTFLLSPSFKNEQEGKEKRARKVTAKHYMEGEMLTPEDDDELVQAYKKWK.

The next 4 membrane-spanning stretches (helical) occupy residues 7-25 (AWMS…MCYA), 40-60 (LSRA…VLIF), 69-89 (IAHI…VFFY), and 96-116 (IVTV…LTFL).

Belongs to the ERG28 family. In terms of tissue distribution, expressed in tissues including muscles, intestine and neurons.

It is found in the endoplasmic reticulum membrane. Its subcellular location is the cell projection. The protein resides in the dendrite. In terms of biological role, promotes the translocation of slo-1 potassium ion channels from the endoplasmic reticulum to its final destination at the plasma membrane, probably by shielding from premature proteasomal degradation in the endoplasmic reticulum. Maintains the levels of slo-1 potassium ion channel at the presynaptic neurons. This is Probable ergosterol biosynthetic protein 28 homolog from Caenorhabditis elegans.